A 373-amino-acid chain; its full sequence is P2Y purinoceptor 1 (373 aa).

Residues Met-1–Phe-51 are Extracellular-facing. N-linked (GlcNAc...) asparagine glycosylation is found at Asn-11 and Asn-27. Disulfide bonds link Cys-42-Cys-296 and Cys-124-Cys-202. Lys-46 lines the ADP pocket. The helical transmembrane segment at Tyr-52–Trp-74 threads the bilayer. Topologically, residues Met-75–Ser-87 are cytoplasmic. The helical transmembrane segment at Val-88–Phe-109 threads the bilayer. Residues Tyr-110–Lys-125 are Extracellular-facing. Asn-113 is a glycosylation site (N-linked (GlcNAc...) asparagine). The helical transmembrane segment at Leu-126–Ala-147 threads the bilayer. The Cytoplasmic segment spans residues His-148–Lys-166. A helical membrane pass occupies residues Asn-167 to Phe-188. Topologically, residues Tyr-189 to Tyr-214 are extracellular. Asn-197 carries an N-linked (GlcNAc...) asparagine glycan. Tyr-203–Thr-205 is an ADP binding site. A helical transmembrane segment spans residues Phe-215–Tyr-237. At Gly-238–Tyr-260 the chain is on the cytoplasmic side. Residues Leu-261–Leu-284 traverse the membrane as a helical segment. Residues Asn-283 to Arg-287, Tyr-303 to Tyr-306, and Arg-310 contribute to the ADP site. The Extracellular portion of the chain corresponds to Arg-285 to Tyr-303. The chain crosses the membrane as a helical span at residues Ala-304–Phe-325. The Cytoplasmic segment spans residues Leu-326 to Leu-373.

This sequence belongs to the G-protein coupled receptor 1 family.

It localises to the cell membrane. ATP functions as antagonist and inhibits ADP-induced mobilization of Ca(2+). The P2Y1 receptor-specific antagonists A3P5PS, A3P5P and A2P5P inhibit downstream signaling mediated by mobilization of Ca(2+) from intracellular stores, and platelet shape changes in response to extracellular ADP. Functionally, receptor for extracellular adenine nucleotides such as ADP. In platelets, binding to ADP leads to mobilization of intracellular calcium ions via activation of phospholipase C, a change in platelet shape, and ultimately platelet aggregation. This Homo sapiens (Human) protein is P2Y purinoceptor 1 (P2RY1).